The chain runs to 154 residues: Large ribosomal subunit protein uL22c (154 aa).

Belongs to the universal ribosomal protein uL22 family. In terms of assembly, part of the 50S ribosomal subunit.

Its subcellular location is the plastid. It is found in the chloroplast. Its function is as follows. This protein binds specifically to 23S rRNA. In terms of biological role, the globular domain of the protein is located near the polypeptide exit tunnel on the outside of the subunit, while an extended beta-hairpin is found that lines the wall of the exit tunnel in the center of the 70S ribosome. In Jasminum nudiflorum (Winter jasmine), this protein is Large ribosomal subunit protein uL22c (rpl22).